The primary structure comprises 232 residues: Phosphatidylserine decarboxylase proenzyme (232 aa).

The active-site Schiff-base intermediate with substrate; via pyruvic acid is S201. S201 bears the Pyruvic acid (Ser); by autocatalysis mark.

It belongs to the phosphatidylserine decarboxylase family. PSD-A subfamily. In terms of assembly, heterodimer of a large membrane-associated beta subunit and a small pyruvoyl-containing alpha subunit. Pyruvate is required as a cofactor. Post-translationally, is synthesized initially as an inactive proenzyme. Formation of the active enzyme involves a self-maturation process in which the active site pyruvoyl group is generated from an internal serine residue via an autocatalytic post-translational modification. Two non-identical subunits are generated from the proenzyme in this reaction, and the pyruvate is formed at the N-terminus of the alpha chain, which is derived from the carboxyl end of the proenzyme. The post-translation cleavage follows an unusual pathway, termed non-hydrolytic serinolysis, in which the side chain hydroxyl group of the serine supplies its oxygen atom to form the C-terminus of the beta chain, while the remainder of the serine residue undergoes an oxidative deamination to produce ammonia and the pyruvoyl prosthetic group on the alpha chain.

It localises to the cell membrane. The enzyme catalyses a 1,2-diacyl-sn-glycero-3-phospho-L-serine + H(+) = a 1,2-diacyl-sn-glycero-3-phosphoethanolamine + CO2. It functions in the pathway phospholipid metabolism; phosphatidylethanolamine biosynthesis; phosphatidylethanolamine from CDP-diacylglycerol: step 2/2. Catalyzes the formation of phosphatidylethanolamine (PtdEtn) from phosphatidylserine (PtdSer). This Mycolicibacterium gilvum (strain PYR-GCK) (Mycobacterium gilvum (strain PYR-GCK)) protein is Phosphatidylserine decarboxylase proenzyme.